A 132-amino-acid chain; its full sequence is Transcription antitermination protein NusB (132 aa).

Belongs to the NusB family.

Its function is as follows. Involved in transcription antitermination. Required for transcription of ribosomal RNA (rRNA) genes. Binds specifically to the boxA antiterminator sequence of the ribosomal RNA (rrn) operons. This is Transcription antitermination protein NusB from Campylobacter lari (strain RM2100 / D67 / ATCC BAA-1060).